The chain runs to 239 residues: LexA repressor (239 aa).

A DNA-binding region (H-T-H motif) is located at residues 26 to 46 (FDEMKDALDLASKSGIHRLIT). The segment at 84-107 (SPSVIEGSLGKPQPVATPAPAKSV) is disordered. Residues serine 159 and lysine 197 each act as for autocatalytic cleavage activity in the active site.

This sequence belongs to the peptidase S24 family. As to quaternary structure, homodimer.

The enzyme catalyses Hydrolysis of Ala-|-Gly bond in repressor LexA.. Represses a number of genes involved in the response to DNA damage (SOS response), including recA and lexA. In the presence of single-stranded DNA, RecA interacts with LexA causing an autocatalytic cleavage which disrupts the DNA-binding part of LexA, leading to derepression of the SOS regulon and eventually DNA repair. The polypeptide is LexA repressor (Rhizobium johnstonii (strain DSM 114642 / LMG 32736 / 3841) (Rhizobium leguminosarum bv. viciae)).